The following is a 341-amino-acid chain: tRNA N6-adenosine threonylcarbamoyltransferase (341 aa).

Fe cation-binding residues include His111 and His115. Substrate-binding positions include 133-137 (AVSGG), Asp166, Gly179, Asp183, and Asn273. Asp301 is a binding site for Fe cation.

It belongs to the KAE1 / TsaD family. Fe(2+) serves as cofactor.

The protein localises to the cytoplasm. The catalysed reaction is L-threonylcarbamoyladenylate + adenosine(37) in tRNA = N(6)-L-threonylcarbamoyladenosine(37) in tRNA + AMP + H(+). Functionally, required for the formation of a threonylcarbamoyl group on adenosine at position 37 (t(6)A37) in tRNAs that read codons beginning with adenine. Is involved in the transfer of the threonylcarbamoyl moiety of threonylcarbamoyl-AMP (TC-AMP) to the N6 group of A37, together with TsaE and TsaB. TsaD likely plays a direct catalytic role in this reaction. This chain is tRNA N6-adenosine threonylcarbamoyltransferase, found in Geotalea daltonii (strain DSM 22248 / JCM 15807 / FRC-32) (Geobacter daltonii).